The following is a 277-amino-acid chain: Large ribosomal subunit protein uL2 (277 aa).

The interval 218-277 (PTVRGSVMNPNDHPHGGGEGKSPIGHPSPLTPWGKPALGYKTRKNKKYSDGMIIKRRGQK) is disordered.

The protein belongs to the universal ribosomal protein uL2 family. As to quaternary structure, part of the 50S ribosomal subunit. Forms a bridge to the 30S subunit in the 70S ribosome.

Functionally, one of the primary rRNA binding proteins. Required for association of the 30S and 50S subunits to form the 70S ribosome, for tRNA binding and peptide bond formation. It has been suggested to have peptidyltransferase activity; this is somewhat controversial. Makes several contacts with the 16S rRNA in the 70S ribosome. This chain is Large ribosomal subunit protein uL2, found in Clostridium novyi (strain NT).